Reading from the N-terminus, the 39-residue chain is Omega-theraphotoxin-Ba1a (39 aa).

Disulfide bonds link C4–C25, C8–C31, and C17–C36.

The protein belongs to the neurotoxin 12 (Hwtx-2) family. 06 (TXP1) subfamily. As to expression, expressed by the venom gland.

Its subcellular location is the secreted. Its function is as follows. Inhibits voltage-gated calcium channels (Cav) in rat cerebellar granule cells. Has insecticidal activity to crickets (Acheta domesticus). Is not toxic to mice. The protein is Omega-theraphotoxin-Ba1a of Brachypelma albiceps (Mexican golden redrump tarantula).